A 156-amino-acid chain; its full sequence is MPCLLPPTQVPEAPSISANNGVLFSSFALLFMFFNSLAISLGSKELYRSSRSCTICSSLIPCRTLIFSLWIDFASDSGASVLVCCFSASLPLVFFFWALFSLSLSFQDDIFLGLYNSGNPVPQLLVLRVPLSLLSTESDVSFSTISPSKSITMVAE.

A run of 3 helical transmembrane segments spans residues 21–41 (GVLF…AISL), 54–74 (TICS…IDFA), and 80–100 (SVLV…WALF).

The protein localises to the membrane. This is an uncharacterized protein from Saccharomyces cerevisiae (strain ATCC 204508 / S288c) (Baker's yeast).